A 561-amino-acid polypeptide reads, in one-letter code: Potassium-transporting ATPase potassium-binding subunit (561 aa).

Helical transmembrane passes span 2-22, 66-86, 135-155, 177-197, 253-273, 280-300, 327-347, 354-374, 378-398, 413-433, 482-502, and 531-551; these read GQGL…TPVL, IRAI…LIYF, ALGF…IAFI, ILLP…VPQT, LIET…YGVF, AWLL…VAAG, FGWA…CGAV, LMPQ…IWGG, GTAY…LMVG, IVLA…PSAI, LSTS…MLLL, and AGIV…LGPI.

Belongs to the KdpA family. As to quaternary structure, the system is composed of three essential subunits: KdpA, KdpB and KdpC.

The protein resides in the cell inner membrane. Functionally, part of the high-affinity ATP-driven potassium transport (or Kdp) system, which catalyzes the hydrolysis of ATP coupled with the electrogenic transport of potassium into the cytoplasm. This subunit binds the periplasmic potassium ions and delivers the ions to the membrane domain of KdpB through an intramembrane tunnel. The polypeptide is Potassium-transporting ATPase potassium-binding subunit (Nostoc sp. (strain PCC 7120 / SAG 25.82 / UTEX 2576)).